The following is a 270-amino-acid chain: Replication protein A 32 kDa subunit (270 aa).

N-acetylmethionine is present on M1. A phosphoserine; by PRKDC mark is found at S4 and S8. A Phosphothreonine; by PRKDC modification is found at T21. Positions 21–41 are disordered; sequence TQSPGGFGSPAPSQAEKKSRA. The residue at position 23 (S23) is a Phosphoserine; by CDK2. The residue at position 29 (S29) is a Phosphoserine; by CDK1. S33 carries the post-translational modification Phosphoserine; by PRKDC. Residues K37 and K38 each participate in a glycyl lysine isopeptide (Lys-Gly) (interchain with G-Cter in ubiquitin) cross-link. A DNA-binding region (OB) is located at residues 74–148; that stretch reads VTIVGIIRHA…KSLVAFKIMP (75 aa). The interval 187-270 is interaction with RAD52, TIPIN, UNG and XPA; the sequence is GMSEAGNFGG…DDHFKSTDAE (84 aa).

It belongs to the replication factor A protein 2 family. In terms of assembly, component of the replication protein A complex (RPA/RP-A), a heterotrimeric complex composed of RPA1, RPA2 and RPA3. Interacts with PRPF19; the PRP19-CDC5L complex is recruited to the sites of DNA repair where it ubiquitinates the replication protein A complex (RPA). Interacts with SERTAD3. Interacts with TIPIN. Interacts with TIMELESS. Interacts with PPP4R2; the interaction is direct, DNA damage-dependent and mediates the recruitment of the PP4 catalytic subunit PPP4C. Interacts (hyperphosphorylated) with RAD51. Interacts with SMARCAL1; the interaction is direct and mediates the recruitment to the RPA complex of SMARCAL1. Interacts with RAD52 and XPA; those interactions are direct and associate RAD52 and XPA to the RPA complex. Interacts with FBH1. Interacts with ETAA1; the interaction is direct and promotes ETAA1 recruitment at stalled replication forks. Interacts with RFWD3. Interacts with DDI2. Interacts (in unphosphorylated form via N-terminus) with EIF4EBP3; the interaction enhances EIF4EBP3-mediated inhibition of EIF4E-mediated mRNA nuclear export. Interacts with BRIP1/FANCJ via the RPA1 subunit; following DNA damage they colocalize in foci in the nucleus. Interacts with nuclear UNG (isoform 2); this interaction mediates UNG recruitment to RPA-coated single-stranded DNA at stalled replication forks. In terms of processing, differentially phosphorylated throughout the cell cycle, becoming phosphorylated at the G1-S transition and dephosphorylated in late mitosis. Mainly phosphorylated at Ser-23 and Ser-29, by cyclin A-CDK2 and cyclin B-CDK1, respectively during DNA replication and mitosis. Dephosphorylation may require the serine/threonine-protein phosphatase 4. Phosphorylation at Ser-23 and Ser-29 is a prerequisite for further phosphorylation. Becomes hyperphosphorylated on additional residues including Ser-4, Ser-8, Thr-21 and Ser-33 in response to DNA damage. Hyperphosphorylation is mediated by ATM, ATR and PRKDC. Primarily recruited to DNA repair nuclear foci as a hypophosphorylated form it undergoes subsequent hyperphosphorylation, catalyzed by ATR. Hyperphosphorylation is required for RAD51 recruitment to chromatin and efficient DNA repair. Phosphorylation at Thr-21 depends upon RFWD3 presence. Post-translationally, DNA damage-induced 'Lys-63'-linked polyubiquitination by PRPF19 mediates ATRIP recruitment to the RPA complex at sites of DNA damage and activation of ATR. Ubiquitinated by RFWD3 at stalled replication forks in response to DNA damage: ubiquitination by RFWD3 does not lead to degradation by the proteasome and promotes removal of the RPA complex from stalled replication forks, promoting homologous recombination.

It is found in the nucleus. The protein resides in the PML body. In terms of biological role, as part of the heterotrimeric replication protein A complex (RPA/RP-A), binds and stabilizes single-stranded DNA intermediates that form during DNA replication or upon DNA stress. It prevents their reannealing and in parallel, recruits and activates different proteins and complexes involved in DNA metabolism. Thereby, it plays an essential role both in DNA replication and the cellular response to DNA damage. In the cellular response to DNA damage, the RPA complex controls DNA repair and DNA damage checkpoint activation. Through recruitment of ATRIP activates the ATR kinase a master regulator of the DNA damage response. It is required for the recruitment of the DNA double-strand break repair factors RAD51 and RAD52 to chromatin in response to DNA damage. Also recruits to sites of DNA damage proteins like XPA and XPG that are involved in nucleotide excision repair and is required for this mechanism of DNA repair. Also plays a role in base excision repair (BER) probably through interaction with UNG. Also recruits SMARCAL1/HARP, which is involved in replication fork restart, to sites of DNA damage. May also play a role in telomere maintenance. RPA stimulates 5'-3' helicase activity of BRIP1/FANCJ. The sequence is that of Replication protein A 32 kDa subunit (RPA2) from Homo sapiens (Human).